The following is a 159-amino-acid chain: Ribosomal RNA large subunit methyltransferase H (159 aa).

S-adenosyl-L-methionine-binding positions include leucine 76, glycine 108, and 127 to 132; that span reads FGRLTL.

It belongs to the RNA methyltransferase RlmH family. As to quaternary structure, homodimer.

The protein resides in the cytoplasm. It catalyses the reaction pseudouridine(1915) in 23S rRNA + S-adenosyl-L-methionine = N(3)-methylpseudouridine(1915) in 23S rRNA + S-adenosyl-L-homocysteine + H(+). Its function is as follows. Specifically methylates the pseudouridine at position 1915 (m3Psi1915) in 23S rRNA. The protein is Ribosomal RNA large subunit methyltransferase H of Listeria welshimeri serovar 6b (strain ATCC 35897 / DSM 20650 / CCUG 15529 / CIP 8149 / NCTC 11857 / SLCC 5334 / V8).